We begin with the raw amino-acid sequence, 104 residues long: uncharacterized protein (104 aa).

One can recognise an HIT domain in the interval 3–104 (VFEKIIQGEI…HFHILSGDKH (102 aa)). A Histidine triad motif motif is present at residues 93–97 (HLHFH).

This is an uncharacterized protein from Helicobacter pylori (strain J99 / ATCC 700824) (Campylobacter pylori J99).